Here is a 227-residue protein sequence, read N- to C-terminus: H-2 class II histocompatibility antigen, A-U alpha chain (227 aa).

Residues aspartate 1 to asparagine 82 are alpha-1. Topologically, residues aspartate 1–glutamate 189 are extracellular. The alpha-2 stretch occupies residues glutamate 83 to tryptophan 176. One can recognise an Ig-like C1-type domain in the interval proline 85–glutamate 177. A disulfide bond links cysteine 105 and cysteine 161. N-linked (GlcNAc...) asparagine glycosylation is present at asparagine 116. Residues glutamate 177–glutamate 189 are connecting peptide. Residues threonine 190–leucine 215 form a helical membrane-spanning segment. At arginine 216 to leucine 227 the chain is on the cytoplasmic side.

The protein belongs to the MHC class II family.

Its subcellular location is the membrane. The sequence is that of H-2 class II histocompatibility antigen, A-U alpha chain (H2-Aa) from Mus musculus (Mouse).